The primary structure comprises 194 residues: Endoribonuclease ToxN (194 aa).

Positions 114–182 (MLKQYLFLKE…DQAKERDKAR (69 aa)) form a coiled coil. Positions 171–182 (ERDQAKERDKAR) are enriched in basic and acidic residues. Positions 171–194 (ERDQAKERDKARRIAYMRQMGRER) are disordered.

This sequence belongs to the ToxN/AbiQ toxin family. One ToxN monomer binds to a 34-nt-long single repeat of the ToxI RNA; this complex forms a triangular heterohexameric complex with ToxN connected by the ToxI RNA to another toxin molecule. The ToxI repeats are cleavage products of their precursor. The ToxI repeat forms a pseudoknot which occludes the toxin active site.

Toxic component of a type III toxin-antitoxin (TA) system. An endoribonuclease which cleaves between the first and second A of AAAAA sequences; it tolerates other nucleotides in positions +2 and +4 of the consensus. Digests cognate antitoxin RNA ToxI as shown by the 2'-3'-cyclic phosphate at the 3' end of the 34-nt repeats and probably other RNAs. Inhibits growth when expressed in E.coli without causing cell lysis; this bacteriostatic effect is neutralized by cognate RNA antitoxin ToxI, which has 2.9 nearly identical 34 nucleotide-long repeats. Non-cognate antitoxin RNA from P.atrosepticum does not inhibit this toxin. The toxin-antitoxin pair function in plasmid maintenance (a plasmid addiction system), but unlike its P.atrosepticum homolog it is not seen to confer resistance to bacteriophages. This chain is Endoribonuclease ToxN, found in Bacillus thuringiensis subsp. kurstaki.